The primary structure comprises 98 residues: Large ribosomal subunit protein uL23 (98 aa).

Belongs to the universal ribosomal protein uL23 family. In terms of assembly, part of the 50S ribosomal subunit. Contacts protein L29, and trigger factor when it is bound to the ribosome.

In terms of biological role, one of the early assembly proteins it binds 23S rRNA. One of the proteins that surrounds the polypeptide exit tunnel on the outside of the ribosome. Forms the main docking site for trigger factor binding to the ribosome. The protein is Large ribosomal subunit protein uL23 of Caulobacter sp. (strain K31).